The primary structure comprises 245 residues: 1-(5-phosphoribosyl)-5-[(5-phosphoribosylamino)methylideneamino] imidazole-4-carboxamide isomerase (245 aa).

Asp-7 acts as the Proton acceptor in catalysis. The Proton donor role is filled by Asp-129.

It belongs to the HisA/HisF family.

It localises to the cytoplasm. The enzyme catalyses 1-(5-phospho-beta-D-ribosyl)-5-[(5-phospho-beta-D-ribosylamino)methylideneamino]imidazole-4-carboxamide = 5-[(5-phospho-1-deoxy-D-ribulos-1-ylimino)methylamino]-1-(5-phospho-beta-D-ribosyl)imidazole-4-carboxamide. Its pathway is amino-acid biosynthesis; L-histidine biosynthesis; L-histidine from 5-phospho-alpha-D-ribose 1-diphosphate: step 4/9. This Shewanella halifaxensis (strain HAW-EB4) protein is 1-(5-phosphoribosyl)-5-[(5-phosphoribosylamino)methylideneamino] imidazole-4-carboxamide isomerase.